A 552-amino-acid chain; its full sequence is Transcription factor lcsF (552 aa).

Disordered regions lie at residues 1–132 (MAPA…DLDP), 169–209 (TSSY…ASLS), 232–258 (EATS…HWSS), and 297–349 (ELTS…QHGA). The tract at residues 31–55 (KDRKEKKRIQNRVAQRSYRSRMKAR) is basic motif. The bZIP domain maps to 31–76 (KDRKEKKRIQNRVAQRSYRSRMKARLGELQSRLQAHEEQKAKEEAE). The segment at 56 to 63 (LGELQSRL) is leucine-zipper. The segment covering 64–79 (QAHEEQKAKEEAERCD) has biased composition (basic and acidic residues). Polar residues-rich tracts occupy residues 98 to 119 (TPPS…NSAS) and 169 to 186 (TSSY…SLSQ). Positions 298 to 347 (LTSTGDLPNATWRPSQQFSGPETTPRSHNAENPTQQQSPINDDTPSTTQH) are enriched in polar residues.

This sequence belongs to the bZIP family.

It localises to the nucleus. Transcription factor that regulates the expression of the gene cluster that mediates the biosynthesis of the lipopeptide antibiotics leucinostatins that show extensive biological activities, including antimalarial, antiviral, antibacterial, antifungal, and antitumor activities, as well as phytotoxic. All 20 genes in the cluster are up-regulated to some extent by lcsF, with the exception of lcsL and lcsP, which are down-regulated. This is Transcription factor lcsF from Purpureocillium lilacinum (Paecilomyces lilacinus).